Here is an 835-residue protein sequence, read N- to C-terminus: Serine/threonine-protein kinase TNNI3K (835 aa).

Residues 21–51 (SESYVITIERLEDDLQIKEKELTELRNIFGS) adopt a coiled-coil conformation. ANK repeat units lie at residues 66 to 96 (NGLSLLHLCCICGGKKSHIRTLMLKGLRPSR), 100 to 129 (NGFTALHLAVYKDNAELITSLLHSGADIQQ), 133 to 162 (GGLTALHIATIAGHLEAADVLLQHGANVNI), 166 to 195 (VFFTPLHIAAYYGHEQVTRLLLKFGADVNV), 199 to 228 (VGDRPLHLASAKGFLNIAKLLMEEGSKADV), 234 to 263 (EDHVPLHFCSRFGHHDIVKYLLQSDLEVQP), 269 to 298 (YGDTPLHLACYNGKFEVAKEIIQISGTESL), 304 to 335 (FSETAFHSACTYGKSIDLVKFLLDQNVININH), 339 to 368 (DGHTGLHSACYHGHIRLVQFLLDNGADMNL), and 381 to 410 (DEQTCLMWAYEKGHDAIVTLLKHYKRPQDE). Residues 463–723 (IEFHEIIGSG…EVVMKLEECL (261 aa)) form the Protein kinase domain. ATP-binding positions include 469–477 (IGSGSFGKV) and K490. The Proton acceptor role is filled by D588. Residues 732 to 746 (ASSNSSGSLSPSSSS) are compositionally biased toward low complexity. Residues 732–751 (ASSNSSGSLSPSSSSDCLVN) are disordered.

This sequence belongs to the protein kinase superfamily. TKL Ser/Thr protein kinase family. MAP kinase kinase kinase subfamily. As to quaternary structure, interacts with TNNI3, ACTC1, ACTA1, MYBPC3, AIP, FABP3 and HADHB. The cofactor is Mg(2+). Post-translationally, autophosphorylated. As to expression, highly expressed in both adult and fetal heart.

Its subcellular location is the nucleus. The protein resides in the cytoplasm. The enzyme catalyses L-seryl-[protein] + ATP = O-phospho-L-seryl-[protein] + ADP + H(+). The catalysed reaction is L-threonyl-[protein] + ATP = O-phospho-L-threonyl-[protein] + ADP + H(+). In terms of biological role, may play a role in cardiac physiology. In Homo sapiens (Human), this protein is Serine/threonine-protein kinase TNNI3K.